Consider the following 242-residue polypeptide: 7-cyano-7-deazaguanine synthase (242 aa).

12–22 (FSGGQDSTTCL) contributes to the ATP binding site. Positions 200, 215, 218, and 221 each coordinate Zn(2+).

This sequence belongs to the QueC family. Zn(2+) serves as cofactor.

It catalyses the reaction 7-carboxy-7-deazaguanine + NH4(+) + ATP = 7-cyano-7-deazaguanine + ADP + phosphate + H2O + H(+). It functions in the pathway purine metabolism; 7-cyano-7-deazaguanine biosynthesis. Functionally, catalyzes the ATP-dependent conversion of 7-carboxy-7-deazaguanine (CDG) to 7-cyano-7-deazaguanine (preQ(0)). The chain is 7-cyano-7-deazaguanine synthase from Nitratidesulfovibrio vulgaris (strain ATCC 29579 / DSM 644 / CCUG 34227 / NCIMB 8303 / VKM B-1760 / Hildenborough) (Desulfovibrio vulgaris).